The following is a 349-amino-acid chain: tRNA N6-adenosine threonylcarbamoyltransferase (349 aa).

Fe cation is bound by residues histidine 113 and histidine 117. Residues 135-139, aspartate 169, glycine 182, aspartate 186, and asparagine 281 contribute to the substrate site; that span reads LVSGG. Aspartate 309 lines the Fe cation pocket.

Belongs to the KAE1 / TsaD family. Requires Fe(2+) as cofactor.

The protein localises to the cytoplasm. The catalysed reaction is L-threonylcarbamoyladenylate + adenosine(37) in tRNA = N(6)-L-threonylcarbamoyladenosine(37) in tRNA + AMP + H(+). Its function is as follows. Required for the formation of a threonylcarbamoyl group on adenosine at position 37 (t(6)A37) in tRNAs that read codons beginning with adenine. Is involved in the transfer of the threonylcarbamoyl moiety of threonylcarbamoyl-AMP (TC-AMP) to the N6 group of A37, together with TsaE and TsaB. TsaD likely plays a direct catalytic role in this reaction. The protein is tRNA N6-adenosine threonylcarbamoyltransferase of Corynebacterium aurimucosum (strain ATCC 700975 / DSM 44827 / CIP 107346 / CN-1) (Corynebacterium nigricans).